We begin with the raw amino-acid sequence, 276 residues long: Shikimate dehydrogenase (NADP(+)) (276 aa).

Shikimate contacts are provided by residues 20-22 (SRS) and threonine 67. The active-site Proton acceptor is the lysine 71. Aspartate 83 is an NADP(+) binding site. Shikimate contacts are provided by asparagine 92 and aspartate 107. NADP(+)-binding positions include 131–135 (GAGGA) and isoleucine 217. Residue tyrosine 219 coordinates shikimate. Glycine 240 is a binding site for NADP(+).

It belongs to the shikimate dehydrogenase family. Homodimer.

The enzyme catalyses shikimate + NADP(+) = 3-dehydroshikimate + NADPH + H(+). It participates in metabolic intermediate biosynthesis; chorismate biosynthesis; chorismate from D-erythrose 4-phosphate and phosphoenolpyruvate: step 4/7. Its function is as follows. Involved in the biosynthesis of the chorismate, which leads to the biosynthesis of aromatic amino acids. Catalyzes the reversible NADPH linked reduction of 3-dehydroshikimate (DHSA) to yield shikimate (SA). The protein is Shikimate dehydrogenase (NADP(+)) of Acidiphilium cryptum (strain JF-5).